Here is a 158-residue protein sequence, read N- to C-terminus: Probable transcription regulator ArfM (158 aa).

Its function is as follows. Activates, in anaerobic conditions, the transcription of the fermentative operons lctEP and alsDS, of the hmp gene encoding a flavohemoglobin-like protein, the nitrite reductase operon nasDE and the heme biosynthesis genes hemN and hemZ. The chain is Probable transcription regulator ArfM (arfM) from Bacillus subtilis (strain 168).